A 233-amino-acid polypeptide reads, in one-letter code: ATP synthase subunit a, chloroplastic (233 aa).

Helical transmembrane passes span 82 to 102 (VPFI…GALI), 121 to 141 (INTT…AGIS), 177 to 199 (LFGN…PLIV), and 211 to 231 (SSIQ…EAIE).

It belongs to the ATPase A chain family. F-type ATPases have 2 components, CF(1) - the catalytic core - and CF(0) - the membrane proton channel. CF(1) has five subunits: alpha(3), beta(3), gamma(1), delta(1), epsilon(1). CF(0) has four main subunits: a, b, b' and c.

The protein localises to the plastid. It localises to the chloroplast thylakoid membrane. In terms of biological role, key component of the proton channel; it plays a direct role in the translocation of protons across the membrane. The chain is ATP synthase subunit a, chloroplastic from Galdieria sulphuraria (Red alga).